A 1368-amino-acid polypeptide reads, in one-letter code: DNA-directed RNA polymerase subunit beta (1368 aa).

The protein belongs to the RNA polymerase beta chain family. As to quaternary structure, the RNAP catalytic core consists of 2 alpha, 1 beta, 1 beta' and 1 omega subunit. When a sigma factor is associated with the core the holoenzyme is formed, which can initiate transcription.

The catalysed reaction is RNA(n) + a ribonucleoside 5'-triphosphate = RNA(n+1) + diphosphate. In terms of biological role, DNA-dependent RNA polymerase catalyzes the transcription of DNA into RNA using the four ribonucleoside triphosphates as substrates. The polypeptide is DNA-directed RNA polymerase subunit beta (Cupriavidus necator (strain ATCC 17699 / DSM 428 / KCTC 22496 / NCIMB 10442 / H16 / Stanier 337) (Ralstonia eutropha)).